Reading from the N-terminus, the 286-residue chain is Pyridoxine 4-dehydrogenase (286 aa).

Residue Y59 is the Proton donor of the active site. 210-218 contacts NADP(+); it reads FPLGGFTPL.

It belongs to the aldo/keto reductase family. Aldo/keto reductase 2 subfamily.

It catalyses the reaction pyridoxine + NADP(+) = pyridoxal + NADPH + H(+). The catalysed reaction is pyridoxine + NAD(+) = pyridoxal + NADH + H(+). Functionally, catalyzes the NAD(P)H-dependent reduction of pyridoxal to pyridoxine in vitro. Is not able to reduce 4-pyridoxate, and to oxidize pyridoxine or pyridoxamine. Has Kemp eliminase activity towards the non-physiological substrate 5-nitrobenzisoxazole, producing 4-nitro-2-cyanophenol; this activity is not considered to be physiologically relevant. The polypeptide is Pyridoxine 4-dehydrogenase (Escherichia coli (strain K12)).